A 347-amino-acid polypeptide reads, in one-letter code: Heat-inducible transcription repressor HrcA (347 aa).

This sequence belongs to the HrcA family.

Functionally, negative regulator of class I heat shock genes (grpE-dnaK-dnaJ and groELS operons). Prevents heat-shock induction of these operons. This is Heat-inducible transcription repressor HrcA from Lactococcus lactis subsp. cremoris (strain MG1363).